The chain runs to 150 residues: Transcription antitermination protein NusB (150 aa).

Belongs to the NusB family.

Functionally, involved in transcription antitermination. Required for transcription of ribosomal RNA (rRNA) genes. Binds specifically to the boxA antiterminator sequence of the ribosomal RNA (rrn) operons. In Alcanivorax borkumensis (strain ATCC 700651 / DSM 11573 / NCIMB 13689 / SK2), this protein is Transcription antitermination protein NusB.